Reading from the N-terminus, the 475-residue chain is 3-isopropylmalate dehydratase large subunit (475 aa).

Positions 352, 413, and 416 each coordinate [4Fe-4S] cluster.

Belongs to the aconitase/IPM isomerase family. LeuC type 1 subfamily. In terms of assembly, heterodimer of LeuC and LeuD. The cofactor is [4Fe-4S] cluster.

The catalysed reaction is (2R,3S)-3-isopropylmalate = (2S)-2-isopropylmalate. It functions in the pathway amino-acid biosynthesis; L-leucine biosynthesis; L-leucine from 3-methyl-2-oxobutanoate: step 2/4. Its function is as follows. Catalyzes the isomerization between 2-isopropylmalate and 3-isopropylmalate, via the formation of 2-isopropylmaleate. The chain is 3-isopropylmalate dehydratase large subunit from Pseudomonas syringae pv. tomato (strain ATCC BAA-871 / DC3000).